Reading from the N-terminus, the 356-residue chain is tRNA-specific 2-thiouridylase MnmA 1 (356 aa).

ATP is bound by residues 8 to 15 (GMSGGVDS) and methionine 34. The Nucleophile role is filled by cysteine 103. The cysteines at positions 103 and 199 are disulfide-linked. Glycine 127 contacts ATP. An interaction with tRNA region spans residues 149-151 (KDQ). Cysteine 199 functions as the Cysteine persulfide intermediate in the catalytic mechanism. The segment at 305–306 (RY) is interaction with tRNA.

It belongs to the MnmA/TRMU family.

It localises to the cytoplasm. It catalyses the reaction S-sulfanyl-L-cysteinyl-[protein] + uridine(34) in tRNA + AH2 + ATP = 2-thiouridine(34) in tRNA + L-cysteinyl-[protein] + A + AMP + diphosphate + H(+). Its function is as follows. Catalyzes the 2-thiolation of uridine at the wobble position (U34) of tRNA, leading to the formation of s(2)U34. This chain is tRNA-specific 2-thiouridylase MnmA 1, found in Clostridium botulinum (strain Loch Maree / Type A3).